The following is a 101-amino-acid chain: Large ribosomal subunit protein eL43 (101 aa).

Residues Cys-40, Cys-43, Cys-59, and Cys-62 each coordinate Zn(2+). A C4-type zinc finger spans residues 40–62 (CPSCRSLVRLERIAFGIWRCPKC).

Belongs to the eukaryotic ribosomal protein eL43 family. Putative zinc-binding subfamily. As to quaternary structure, part of the 50S ribosomal subunit. Zn(2+) serves as cofactor.

In terms of biological role, binds to the 23S rRNA. The protein is Large ribosomal subunit protein eL43 of Pyrobaculum aerophilum (strain ATCC 51768 / DSM 7523 / JCM 9630 / CIP 104966 / NBRC 100827 / IM2).